A 425-amino-acid polypeptide reads, in one-letter code: cAMP/cGMP-dependent 3',5'-cAMP/cGMP phosphodiesterase 7 (425 aa).

An N-terminal signal peptide occupies residues 1–17 (MKYLILILIFFIEINNG).

Belongs to the cyclic nucleotide phosphodiesterase class-II family.

It localises to the secreted. Its subcellular location is the extracellular space. It is found in the cell surface. It catalyses the reaction 3',5'-cyclic AMP + H2O = AMP + H(+). The enzyme catalyses 3',5'-cyclic GMP + H2O = GMP + H(+). With respect to regulation, inhibited by dithiotreitol (DTT). Its function is as follows. Phosphodiesterase with dual cAMP/cGMP specificity. However, displays a preference for cAMP over cGMP. Seems to regulate cAMP/cGMP concentration especially during cell aggregation. This Dictyostelium discoideum (Social amoeba) protein is cAMP/cGMP-dependent 3',5'-cAMP/cGMP phosphodiesterase 7 (pde7).